The primary structure comprises 132 residues: Vesicle transport protein GOT1A (132 aa).

The Cytoplasmic portion of the chain corresponds to 1–9 (MISITEWQK). Residues 10 to 30 (IGVGITGFGIFFILFGTLLYF) form a helical membrane-spanning segment. D31 is a topological domain (lumenal). A helical membrane pass occupies residues 32–52 (SVLLAFGNLLFLTGLSLIIGL). Residues 53 to 68 (RKTFWFFFQRHKLKGT) lie on the Cytoplasmic side of the membrane. Residues 69–89 (SFLLGGVVIVLLRWPLLGMFL) traverse the membrane as a helical segment. Over 90–100 (ETYGFFSLFKG) the chain is Lumenal. Residues 101–121 (FFPVAFGFLGNVCNIPFLGAL) traverse the membrane as a helical segment. Residues 122–132 (FRRLQGTSSMV) are Cytoplasmic-facing.

This sequence belongs to the GOT1 family.

The protein localises to the golgi apparatus membrane. Its function is as follows. May be involved in fusion of ER-derived transport vesicles with the Golgi complex. The chain is Vesicle transport protein GOT1A from Homo sapiens (Human).